A 397-amino-acid chain; its full sequence is Elongation factor Tu 1 (397 aa).

The tr-type G domain occupies 10–206 (KPHVNIGTIG…AIDTWIPEPV (197 aa)). The G1 stretch occupies residues 19-26 (GHVDHGKT). Position 19–26 (19–26 (GHVDHGKT)) interacts with GTP. A Mg(2+)-binding site is contributed by Thr26. The segment at 61–65 (GITIS) is G2. A G3 region spans residues 82–85 (DCPG). Residues 82-86 (DCPGH) and 137-140 (NKCD) contribute to the GTP site. Positions 137–140 (NKCD) are G4. Positions 175 to 177 (SAL) are G5.

Belongs to the TRAFAC class translation factor GTPase superfamily. Classic translation factor GTPase family. EF-Tu/EF-1A subfamily. Monomer.

Its subcellular location is the cytoplasm. It carries out the reaction GTP + H2O = GDP + phosphate + H(+). Its function is as follows. GTP hydrolase that promotes the GTP-dependent binding of aminoacyl-tRNA to the A-site of ribosomes during protein biosynthesis. This chain is Elongation factor Tu 1, found in Alkaliphilus metalliredigens (strain QYMF).